A 423-amino-acid polypeptide reads, in one-letter code: Serine--tRNA ligase 1 (423 aa).

An L-serine-binding site is contributed by 231–233; it reads TAE. 262 to 264 serves as a coordination point for ATP; the sequence is RSE. Glutamate 285 serves as a coordination point for L-serine. 349 to 352 contributes to the ATP binding site; sequence EISS. Serine 384 is an L-serine binding site.

This sequence belongs to the class-II aminoacyl-tRNA synthetase family. Type-1 seryl-tRNA synthetase subfamily. Homodimer. The tRNA molecule binds across the dimer.

It is found in the cytoplasm. It carries out the reaction tRNA(Ser) + L-serine + ATP = L-seryl-tRNA(Ser) + AMP + diphosphate + H(+). It catalyses the reaction tRNA(Sec) + L-serine + ATP = L-seryl-tRNA(Sec) + AMP + diphosphate + H(+). The protein operates within aminoacyl-tRNA biosynthesis; selenocysteinyl-tRNA(Sec) biosynthesis; L-seryl-tRNA(Sec) from L-serine and tRNA(Sec): step 1/1. Catalyzes the attachment of serine to tRNA(Ser). Is also able to aminoacylate tRNA(Sec) with serine, to form the misacylated tRNA L-seryl-tRNA(Sec), which will be further converted into selenocysteinyl-tRNA(Sec). This chain is Serine--tRNA ligase 1, found in Enterococcus faecalis (strain ATCC 700802 / V583).